A 218-amino-acid chain; its full sequence is NAD(P)H-quinone oxidoreductase subunit I (218 aa).

4Fe-4S ferredoxin-type domains follow at residues 55–84 (GRIH…VDWV) and 95–124 (RNYS…MTEE). Residues Cys-64, Cys-67, Cys-70, Cys-74, Cys-104, Cys-107, Cys-110, and Cys-114 each coordinate [4Fe-4S] cluster. Residues 192 to 218 (LSLQQDSLQGDEGESLQDAPDQDQPKG) are disordered.

Belongs to the complex I 23 kDa subunit family. In terms of assembly, NDH-1 is composed of at least 11 different subunits. [4Fe-4S] cluster serves as cofactor.

The protein resides in the cellular thylakoid membrane. The catalysed reaction is a plastoquinone + NADH + (n+1) H(+)(in) = a plastoquinol + NAD(+) + n H(+)(out). It catalyses the reaction a plastoquinone + NADPH + (n+1) H(+)(in) = a plastoquinol + NADP(+) + n H(+)(out). Its function is as follows. NDH-1 shuttles electrons from an unknown electron donor, via FMN and iron-sulfur (Fe-S) centers, to quinones in the respiratory and/or the photosynthetic chain. The immediate electron acceptor for the enzyme in this species is believed to be plastoquinone. Couples the redox reaction to proton translocation, and thus conserves the redox energy in a proton gradient. The sequence is that of NAD(P)H-quinone oxidoreductase subunit I from Prochlorococcus marinus (strain MIT 9303).